Consider the following 414-residue polypeptide: Putative dipeptidase TRV_05564 (414 aa).

The first 20 residues, 1–20, serve as a signal peptide directing secretion; that stretch reads MAALFVSLLALTSLVPVQGA. Positions 45, 47, and 157 each coordinate Zn(2+). A disulfide bond links Cys96 and Cys186. His184 provides a ligand contact to substrate. 2 residues coordinate Zn(2+): His228 and His249. Residues Arg260 and Asp320 each contribute to the substrate site. Asn392 is a glycosylation site (N-linked (GlcNAc...) asparagine).

The protein belongs to the metallo-dependent hydrolases superfamily. Peptidase M19 family. Zn(2+) is required as a cofactor.

The enzyme catalyses an L-aminoacyl-L-amino acid + H2O = 2 an L-alpha-amino acid. Functionally, hydrolyzes a wide range of dipeptides. The polypeptide is Putative dipeptidase TRV_05564 (Trichophyton verrucosum (strain HKI 0517)).